The chain runs to 262 residues: Flap endonuclease Xni (262 aa).

Asp-105 serves as a coordination point for Mg(2+). Residues 162–257 (ERSQFLDLMA…FRVIDSPPEK (96 aa)) enclose the 5'-3' exonuclease domain. Leu-172, Ala-173, Pro-181, Ile-183, and Ile-186 together coordinate K(+). The tract at residues 185–190 (GIGPKS) is interaction with DNA.

It belongs to the Xni family. Requires Mg(2+) as cofactor. K(+) is required as a cofactor.

In terms of biological role, has flap endonuclease activity. During DNA replication, flap endonucleases cleave the 5'-overhanging flap structure that is generated by displacement synthesis when DNA polymerase encounters the 5'-end of a downstream Okazaki fragment. This chain is Flap endonuclease Xni, found in Shewanella baltica (strain OS223).